A 415-amino-acid chain; its full sequence is Serine hydroxymethyltransferase 1 (415 aa).

(6S)-5,6,7,8-tetrahydrofolate contacts are provided by residues leucine 122 and 126–128 (GHL). An N6-(pyridoxal phosphate)lysine modification is found at lysine 230.

This sequence belongs to the SHMT family. As to quaternary structure, homodimer. Pyridoxal 5'-phosphate serves as cofactor.

The protein localises to the cytoplasm. It carries out the reaction (6R)-5,10-methylene-5,6,7,8-tetrahydrofolate + glycine + H2O = (6S)-5,6,7,8-tetrahydrofolate + L-serine. It functions in the pathway one-carbon metabolism; tetrahydrofolate interconversion. The protein operates within amino-acid biosynthesis; glycine biosynthesis; glycine from L-serine: step 1/1. Catalyzes the reversible interconversion of serine and glycine with tetrahydrofolate (THF) serving as the one-carbon carrier. This reaction serves as the major source of one-carbon groups required for the biosynthesis of purines, thymidylate, methionine, and other important biomolecules. Also exhibits THF-independent aldolase activity toward beta-hydroxyamino acids, producing glycine and aldehydes, via a retro-aldol mechanism. This Burkholderia mallei (strain ATCC 23344) protein is Serine hydroxymethyltransferase 1.